A 512-amino-acid polypeptide reads, in one-letter code: 2,3-bisphosphoglycerate-independent phosphoglycerate mutase (512 aa).

Residues Asp12 and Ser62 each contribute to the Mn(2+) site. Ser62 (phosphoserine intermediate) is an active-site residue. Substrate-binding positions include His123, Arg153 to Asp154, Arg185, Arg191, Arg260 to Arg263, and Lys333. Asp400, His404, Asp441, His442, and His460 together coordinate Mn(2+).

This sequence belongs to the BPG-independent phosphoglycerate mutase family. As to quaternary structure, monomer. Requires Mn(2+) as cofactor.

The enzyme catalyses (2R)-2-phosphoglycerate = (2R)-3-phosphoglycerate. Its pathway is carbohydrate degradation; glycolysis; pyruvate from D-glyceraldehyde 3-phosphate: step 3/5. Its function is as follows. Catalyzes the interconversion of 2-phosphoglycerate and 3-phosphoglycerate. This is 2,3-bisphosphoglycerate-independent phosphoglycerate mutase from Clostridium beijerinckii (strain ATCC 51743 / NCIMB 8052) (Clostridium acetobutylicum).